We begin with the raw amino-acid sequence, 110 residues long: Large ribosomal subunit protein uL22 (110 aa).

The protein belongs to the universal ribosomal protein uL22 family. In terms of assembly, part of the 50S ribosomal subunit.

Functionally, this protein binds specifically to 23S rRNA; its binding is stimulated by other ribosomal proteins, e.g. L4, L17, and L20. It is important during the early stages of 50S assembly. It makes multiple contacts with different domains of the 23S rRNA in the assembled 50S subunit and ribosome. Its function is as follows. The globular domain of the protein is located near the polypeptide exit tunnel on the outside of the subunit, while an extended beta-hairpin is found that lines the wall of the exit tunnel in the center of the 70S ribosome. The protein is Large ribosomal subunit protein uL22 of Haemophilus ducreyi (strain 35000HP / ATCC 700724).